The following is a 319-amino-acid chain: Ribonucleoside-diphosphate reductase 2 subunit beta (319 aa).

Asp-67, Glu-98, and His-101 together coordinate Fe cation. Tyr-105 is a catalytic residue. Residues Glu-158, Glu-192, and His-195 each coordinate Fe cation.

It belongs to the ribonucleoside diphosphate reductase small chain family. In terms of assembly, tetramer of two alpha and two beta subunits. Fe cation is required as a cofactor.

It carries out the reaction a 2'-deoxyribonucleoside 5'-diphosphate + [thioredoxin]-disulfide + H2O = a ribonucleoside 5'-diphosphate + [thioredoxin]-dithiol. In terms of biological role, provides the precursors necessary for DNA synthesis. Catalyzes the biosynthesis of deoxyribonucleotides from the corresponding ribonucleotides. R2F contains the tyrosyl radical required for catalysis. The chain is Ribonucleoside-diphosphate reductase 2 subunit beta (nrdF) from Salmonella typhimurium (strain LT2 / SGSC1412 / ATCC 700720).